We begin with the raw amino-acid sequence, 94 residues long: Large ribosomal subunit protein bL25 (94 aa).

The protein belongs to the bacterial ribosomal protein bL25 family. As to quaternary structure, part of the 50S ribosomal subunit; part of the 5S rRNA/L5/L18/L25 subcomplex. Contacts the 5S rRNA. Binds to the 5S rRNA independently of L5 and L18.

Its function is as follows. This is one of the proteins that binds to the 5S RNA in the ribosome where it forms part of the central protuberance. This Cronobacter sakazakii (strain ATCC BAA-894) (Enterobacter sakazakii) protein is Large ribosomal subunit protein bL25.